A 201-amino-acid chain; its full sequence is LexA repressor 1 (201 aa).

Residues leucine 28–glutamate 48 constitute a DNA-binding region (H-T-H motif). Residues serine 120 and lysine 157 each act as for autocatalytic cleavage activity in the active site.

The protein belongs to the peptidase S24 family. Homodimer.

The catalysed reaction is Hydrolysis of Ala-|-Gly bond in repressor LexA.. Represses a number of genes involved in the response to DNA damage (SOS response), including recA and lexA. In the presence of single-stranded DNA, RecA interacts with LexA causing an autocatalytic cleavage which disrupts the DNA-binding part of LexA, leading to derepression of the SOS regulon and eventually DNA repair. This Geobacter sulfurreducens (strain ATCC 51573 / DSM 12127 / PCA) protein is LexA repressor 1.